Here is a 962-residue protein sequence, read N- to C-terminus: Glycine dehydrogenase (decarboxylating) (962 aa).

Position 709 is an N6-(pyridoxal phosphate)lysine (Lys709).

The protein belongs to the GcvP family. As to quaternary structure, the glycine cleavage system is composed of four proteins: P, T, L and H. Requires pyridoxal 5'-phosphate as cofactor.

The catalysed reaction is N(6)-[(R)-lipoyl]-L-lysyl-[glycine-cleavage complex H protein] + glycine + H(+) = N(6)-[(R)-S(8)-aminomethyldihydrolipoyl]-L-lysyl-[glycine-cleavage complex H protein] + CO2. The glycine cleavage system catalyzes the degradation of glycine. The P protein binds the alpha-amino group of glycine through its pyridoxal phosphate cofactor; CO(2) is released and the remaining methylamine moiety is then transferred to the lipoamide cofactor of the H protein. The sequence is that of Glycine dehydrogenase (decarboxylating) from Shewanella putrefaciens (strain CN-32 / ATCC BAA-453).